A 931-amino-acid polypeptide reads, in one-letter code: Aconitate hydratase A (931 aa).

Residues 402-454 are disordered; the sequence is SASPVDEASAESFPASDAPAYGSQENGAGAPQHADGTGAAVPSNPVTVTAPDG. [4Fe-4S] cluster is bound by residues cysteine 472, cysteine 538, and cysteine 541.

Belongs to the aconitase/IPM isomerase family. Requires [4Fe-4S] cluster as cofactor.

The catalysed reaction is citrate = D-threo-isocitrate. It carries out the reaction citrate = cis-aconitate + H2O. The enzyme catalyses cis-aconitate + H2O = D-threo-isocitrate. Its pathway is carbohydrate metabolism; tricarboxylic acid cycle; isocitrate from oxaloacetate: step 2/2. Functionally, catalyzes the reversible isomerization of citrate to isocitrate via cis-aconitate in the tricarboxylic acid (TCA) cycle. Aconitase activity is important for the initiation of morphological and physiological differentiation of S.viridochromogenes. In addition, the apo form of AcnA (lacking the [4Fe-4S] cluster) functions as a RNA-binding regulatory protein, which binds to iron responsive elements (IREs) located on the untranslated region of certain mRNAs, including recA and ftsZ. Binding to IRE-like structures probably alters the target mRNA stability and regulates the protein amount. The apo form plays a regulatory role in oxidative stress response. The polypeptide is Aconitate hydratase A (Streptomyces viridochromogenes (strain DSM 40736 / JCM 4977 / BCRC 1201 / Tue 494)).